Here is a 741-residue protein sequence, read N- to C-terminus: Catalase-peroxidase (741 aa).

The first 23 residues, 1–23 (MLKKIVTALGMSGMLLASSNAIA), serve as a signal peptide directing secretion. Positions 102–223 (WHDAGTYRIY…YAATQMGLIY (122 aa)) form a cross-link, tryptophyl-tyrosyl-methioninium (Trp-Tyr) (with M-249). His-103 functions as the Proton acceptor in the catalytic mechanism. The segment at residues 223–249 (YVNPEGPDGKPDIKGAASEIRQAFRAM) is a cross-link (tryptophyl-tyrosyl-methioninium (Tyr-Met) (with W-102)). Heme b is bound at residue His-264.

The protein belongs to the peroxidase family. Peroxidase/catalase subfamily. As to quaternary structure, homodimer or homotetramer. Heme b is required as a cofactor. Formation of the three residue Trp-Tyr-Met cross-link is important for the catalase, but not the peroxidase activity of the enzyme.

The enzyme catalyses H2O2 + AH2 = A + 2 H2O. It catalyses the reaction 2 H2O2 = O2 + 2 H2O. Its function is as follows. Bifunctional enzyme with both catalase and broad-spectrum peroxidase activity. This chain is Catalase-peroxidase, found in Francisella tularensis subsp. tularensis (strain FSC 198).